We begin with the raw amino-acid sequence, 545 residues long: B3 domain-containing protein Os03g0620500 (545 aa).

The segment at residues 26 to 119 (MKCFHRQMSA…RRASGVQERN (94 aa)) is a DNA-binding region (TF-B3 1). A disordered region spans residues 111-188 (RASGVQERNA…SSSEHESSYD (78 aa)). The span at 173–186 (EEAKESSSSEHESS) shows a compositional bias: basic and acidic residues. The segment at residues 231-331 (VTTMKHSNVN…RATVHLLRET (101 aa)) is a DNA-binding region (TF-B3 2). The tract at residues 368 to 400 (RRGTMEPSTTNVKKEADNEQCNNGQGKRQEPLN) is disordered. Positions 441 to 542 (YVSIMNKSNV…AMKVHIIRHN (102 aa)) form a DNA-binding region, TF-B3 3.

The protein localises to the nucleus. The polypeptide is B3 domain-containing protein Os03g0620500 (Oryza sativa subsp. japonica (Rice)).